We begin with the raw amino-acid sequence, 190 residues long: FMN reductase (NADH) RutF (190 aa).

This sequence belongs to the non-flavoprotein flavin reductase family. RutF subfamily.

The catalysed reaction is FMNH2 + NAD(+) = FMN + NADH + 2 H(+). In terms of biological role, catalyzes the reduction of FMN to FMNH2 which is used to reduce pyrimidine by RutA via the Rut pathway. This Pantoea ananatis (strain LMG 20103) protein is FMN reductase (NADH) RutF.